The chain runs to 119 residues: Small ribosomal subunit protein uS13 (119 aa).

Residues 92 to 119 (RRGLPVRGQQTQTNARTRKGPRRGPASR) form a disordered region.

This sequence belongs to the universal ribosomal protein uS13 family. As to quaternary structure, part of the 30S ribosomal subunit. Forms a loose heterodimer with protein S19. Forms two bridges to the 50S subunit in the 70S ribosome.

In terms of biological role, located at the top of the head of the 30S subunit, it contacts several helices of the 16S rRNA. In the 70S ribosome it contacts the 23S rRNA (bridge B1a) and protein L5 of the 50S subunit (bridge B1b), connecting the 2 subunits; these bridges are implicated in subunit movement. Contacts the tRNAs in the A and P-sites. The protein is Small ribosomal subunit protein uS13 of Halorhodospira halophila (strain DSM 244 / SL1) (Ectothiorhodospira halophila (strain DSM 244 / SL1)).